The following is a 310-amino-acid chain: MTSIDNRPLPFIYQFTAGAIAGVSELLVMYPLDVVKTRMQLQVTTKGHPAVVAAKAAVDHYTGVMDCLTKIVKKEGFSHLYKGITSPILMEAPKRAIKFSGNDTFQTFYKKIFPTPNGEMTQKIAIYSGASAGAVEAFVVAPFELVKIRLQDVNSQFKTPIEVVKNSVVKGGVLSLFNGLEATIWRHVLWNAGYFGIIFQIRKLLPAAKTSTEKTRNDLIAGAIGGTVGCLLNTPFDVVKSRIQRSSGPLRKYNWSLPSVLLVYREEGFKALYKGFAPKVMRLAPGGGLLLVVFTNVMDFFREVKYGKKQ.

Helical transmembrane passes span 9-29, 78-97, 126-146, 179-199, 219-239, and 281-301; these read LPFI…LLVM, SHLY…KRAI, IYSG…FELV, GLEA…GIIF, LIAG…FDVV, and MRLA…MDFF. 3 Solcar repeats span residues 9 to 108, 120 to 204, and 213 to 300; these read LPFI…FQTF, MTQK…IRKL, and EKTR…VMDF.

Belongs to the mitochondrial carrier (TC 2.A.29) family.

It is found in the mitochondrion inner membrane. Its function is as follows. Transports C5-C7 oxodicarboxylates across the inner membranes of mitochondria. Can transport 2-oxoadipate, 2-oxoglutarate, adipate, glutarate, 2-oxopimelate, oxaloacetate, citrate and malate. The main physiological role is probably to supply 2-oxoadipate and 2-oxoglutarate from the mitochondrial matrix to the cytosol where they are used in the biosynthesis of lysine and glutamate, respectively, and in lysine catabolism. The chain is Mitochondrial 2-oxodicarboxylate carrier 1 (ODC1) from Saccharomyces cerevisiae (strain ATCC 204508 / S288c) (Baker's yeast).